The following is a 291-amino-acid chain: Popeye domain-containing protein 3 (291 aa).

An N-linked (GlcNAc...) asparagine glycan is attached at N4. 3 consecutive transmembrane segments (helical) span residues 27–44 (GAIY…FMGG), 48–70 (FGLL…WAWV), and 77–99 (IFSW…AYQV).

This sequence belongs to the popeye family. Expressed predominantly in skeletal muscle (at protein level). Also detected in heart.

Its subcellular location is the membrane. In terms of biological role, may play a role in the maintenance of heart function mediated, at least in part, through cAMP-binding. May play a role in the regulation of KCNK2/TREK-1-mediated current amplitude. The polypeptide is Popeye domain-containing protein 3 (POPDC3) (Homo sapiens (Human)).